Reading from the N-terminus, the 312-residue chain is Methionyl-tRNA formyltransferase (312 aa).

(6S)-5,6,7,8-tetrahydrofolate is bound at residue 109-112 (SLLP).

Belongs to the Fmt family.

The catalysed reaction is L-methionyl-tRNA(fMet) + (6R)-10-formyltetrahydrofolate = N-formyl-L-methionyl-tRNA(fMet) + (6S)-5,6,7,8-tetrahydrofolate + H(+). In terms of biological role, attaches a formyl group to the free amino group of methionyl-tRNA(fMet). The formyl group appears to play a dual role in the initiator identity of N-formylmethionyl-tRNA by promoting its recognition by IF2 and preventing the misappropriation of this tRNA by the elongation apparatus. The polypeptide is Methionyl-tRNA formyltransferase (Ruminiclostridium cellulolyticum (strain ATCC 35319 / DSM 5812 / JCM 6584 / H10) (Clostridium cellulolyticum)).